The primary structure comprises 125 residues: SOSS complex subunit C homolog (125 aa).

Residues 43–77 (MPSPQLLGQPTVAPEFLPQGVGLPTNATPPRSAFN) are disordered. Residues 67–77 (TNATPPRSAFN) show a composition bias toward polar residues.

Belongs to the SOSS-C family.

The sequence is that of SOSS complex subunit C homolog from Drosophila persimilis (Fruit fly).